The chain runs to 320 residues: Copper chaperone for superoxide dismutase, chloroplastic/cytosolic (320 aa).

Residues 1-67 constitute a chloroplast transit peptide; that stretch reads MASILRSVAT…LSRSFVSSPM (67 aa). In terms of domain architecture, HMA spans 86-149; sequence QLLTEFMVDM…ALEQTGRKAR (64 aa). Residues C97, C100, C300, and C302 each coordinate Cu cation.

The protein in the C-terminal section; belongs to the Cu-Zn superoxide dismutase family. Interacts with CSD1. Cu(2+) serves as cofactor. In terms of tissue distribution, expressed in roots, shoots, stems and flowers, and at lower levels in rosette and cauline leaves.

It localises to the plastid. Its subcellular location is the chloroplast. The protein localises to the cytoplasm. The protein resides in the cytosol. Its function is as follows. Copper chaperone for the superoxide dismutases CSD1, CSD2 and CSD3. Binds copper ions and delivers them specifically to CSDs. Is required for assistance in CSDs disulfide bond formation and thereby activation of CSDs. May be involved in the negative regulation of heat stress-responsive genes and thermotolerance. The chain is Copper chaperone for superoxide dismutase, chloroplastic/cytosolic (CCS) from Arabidopsis thaliana (Mouse-ear cress).